The primary structure comprises 308 residues: Glycine-rich protein GRP33 (308 aa).

The KH domain maps to 83–118; that stretch reads DQFPKYNFLGKLLGPGGSTMKQLQDETMTKISILGR. Gly residues-rich tracts occupy residues 203 to 220 and 273 to 294; these read GPMG…GGFS and RGAG…GGGK. 2 disordered regions span residues 203–222 and 270–308; these read GPMG…FSGP and SPGR…AAPY.

The arginines in the Gly-rich domain might be methylated.

This chain is Glycine-rich protein GRP33, found in Artemia salina (Brine shrimp).